An 88-amino-acid polypeptide reads, in one-letter code: Small ribosomal subunit protein bS20 (88 aa).

2 disordered regions span residues 1 to 25 and 61 to 88; these read MANS…KARR and GVTK…ALGA.

It belongs to the bacterial ribosomal protein bS20 family.

Functionally, binds directly to 16S ribosomal RNA. This Jannaschia sp. (strain CCS1) protein is Small ribosomal subunit protein bS20.